The chain runs to 307 residues: Peroxisomal membrane protein PMP34 (307 aa).

Residues 1–9 are Cytoplasmic-facing; it reads MASVLSYES. Positions 1 to 147 are necessary for targeting to peroxisomes and interaction with PEX19; sequence MASVLSYESL…NEDIIPTNYK (147 aa). 3 Solcar repeats span residues 7 to 92, 99 to 192, and 200 to 294; these read YESL…LKAV, SSTG…LKRQ, and LSSL…LTAA. Residues 10 to 30 form a helical membrane-spanning segment; the sequence is LVHAVAGAVGSVTAMTVFFPL. At 31 to 66 the chain is on the lumenal side; that stretch reads DTARLRLQVDEKRKSKTTHAVLLEIIKEEGLLAPYR. A helical transmembrane segment spans residues 67 to 87; it reads GWFPVISSLCCSNFVYFYTFN. Residues 88 to 104 lie on the Cytoplasmic side of the membrane; that stretch reads SLKAVWVKGQRSSTGKD. A helical membrane pass occupies residues 105–125; the sequence is LVVGFVAGVVNVLLTTPLWVV. Over 126–160 the chain is Lumenal; the sequence is NTRLKLQGAKFRNEDIIPTNYKGIIDAFHQIIRDE. The helical transmembrane segment at 161–181 threads the bilayer; that stretch reads GILALWNGTFPSLLLVFNPAI. Residues 182–202 are Cytoplasmic-facing; that stretch reads QFMFYEGLKRQLLKKRMKLSS. Positions 190-199 match the Peroxisome localization signal motif; it reads KRQLLKKRMK. A helical transmembrane segment spans residues 203 to 223; it reads LDVFIIGAIAKAIATTVTYPM. The Lumenal portion of the chain corresponds to 224 to 280; it reads QTVQSILRFGRHRLNPENRTLGSLRNVLSLLHQRVKRFGIMGLYKGLEAKLLQTVLT. The necessary for targeting to peroxisomes and interaction with PEX19 stretch occupies residues 244 to 307; the sequence is LGSLRNVLSL…VMGLKSTHKH (64 aa). Residues 281–301 form a helical membrane-spanning segment; it reads AALMFLVYEKLTAATFTVMGL. Over 302-307 the chain is Cytoplasmic; the sequence is KSTHKH.

This sequence belongs to the mitochondrial carrier (TC 2.A.29) family. Interacts (via N- and C-terminus peroxisomal targeting regions) with PEX19; the interaction occurs with the newly synthesized SLC25A17 in the cytosol. In terms of tissue distribution, expressed in liver, kidney, heart, spleen, muscle and lung.

The protein localises to the cytoplasm. It is found in the peroxisome membrane. It carries out the reaction AMP(out) + CoA(in) = AMP(in) + CoA(out). The catalysed reaction is 3'-dephospho-CoA(in) + AMP(out) = 3'-dephospho-CoA(out) + AMP(in). The enzyme catalyses acetyl-CoA(in) + AMP(out) = acetyl-CoA(out) + AMP(in). It catalyses the reaction AMP(in) + NAD(+)(out) = AMP(out) + NAD(+)(in). It carries out the reaction FAD(in) + AMP(out) = FAD(out) + AMP(in). The catalysed reaction is FMN(in) + AMP(out) = FMN(out) + AMP(in). The enzyme catalyses AMP(in) + ADP(out) = AMP(out) + ADP(in). It catalyses the reaction adenosine 3',5'-bisphosphate(in) + AMP(out) = adenosine 3',5'-bisphosphate(out) + AMP(in). It carries out the reaction FAD(in) + CoA(out) = FAD(out) + CoA(in). The catalysed reaction is FAD(in) + adenosine 3',5'-bisphosphate(out) = FAD(out) + adenosine 3',5'-bisphosphate(in). The enzyme catalyses FMN(in) + CoA(out) = FMN(out) + CoA(in). It catalyses the reaction FMN(in) + adenosine 3',5'-bisphosphate(out) = FMN(out) + adenosine 3',5'-bisphosphate(in). It carries out the reaction FAD(out) + NAD(+)(in) = FAD(in) + NAD(+)(out). The catalysed reaction is FMN(out) + NAD(+)(in) = FMN(in) + NAD(+)(out). The enzyme catalyses NAD(+)(in) + CoA(out) = NAD(+)(out) + CoA(in). It catalyses the reaction adenosine 3',5'-bisphosphate(out) + NAD(+)(in) = adenosine 3',5'-bisphosphate(in) + NAD(+)(out). It carries out the reaction FMN(out) + ADP(in) = FMN(in) + ADP(out). The catalysed reaction is FAD(out) + ADP(in) = FAD(in) + ADP(out). The enzyme catalyses ADP(out) + CoA(in) = ADP(in) + CoA(out). It catalyses the reaction adenosine 3',5'-bisphosphate(in) + ADP(out) = adenosine 3',5'-bisphosphate(out) + ADP(in). In terms of biological role, peroxisomal transporter for multiple cofactors like coenzyme A (CoA), flavin adenine dinucleotide (FAD), flavin mononucleotide (FMN) and nucleotide adenosine monophosphate (AMP), and to a lesser extent for nicotinamide adenine dinucleotide (NAD(+)), adenosine diphosphate (ADP) and adenosine 3',5'-diphosphate (PAP). May catalyze the transport of free CoA, FAD and NAD(+) from the cytosol into the peroxisomal matrix by a counter-exchange mechanism. In Mus musculus (Mouse), this protein is Peroxisomal membrane protein PMP34 (Slc25a17).